The sequence spans 1487 residues: Chromosome partition protein MukB (1487 aa).

34–41 (GGNGAGKS) lines the ATP pocket. Coiled-coil stretches lie at residues 297–426 (SSRE…LEKA), 460–666 (ALKH…RLAS), 781–806 (RAAR…AKAA), 836–1111 (EQAL…RTFV), and 1210–1266 (VEAI…LSNI). Residues 667–784 (PGGSNDPRLK…VIPLFGRAAR (118 aa)) form a flexible hinge region.

It belongs to the SMC family. MukB subfamily. As to quaternary structure, homodimerization via its hinge domain. Binds to DNA via its C-terminal region. Interacts, and probably forms a ternary complex, with MukE and MukF via its C-terminal region. The complex formation is stimulated by calcium or magnesium. Interacts with tubulin-related protein FtsZ.

The protein resides in the cytoplasm. It is found in the nucleoid. Functionally, plays a central role in chromosome condensation, segregation and cell cycle progression. Functions as a homodimer, which is essential for chromosome partition. Involved in negative DNA supercoiling in vivo, and by this means organize and compact chromosomes. May achieve or facilitate chromosome segregation by condensation DNA from both sides of a centrally located replisome during cell division. This chain is Chromosome partition protein MukB, found in Vibrio vulnificus (strain CMCP6).